The sequence spans 204 residues: Nicotine blue oxidoreductase (204 aa).

Homotetramer. FMN is required as a cofactor.

It carries out the reaction 3,3'-bipyridine-2,2',5,5',6,6'-hexol + NADP(+) = (E)-2,2',5,5'-tetrahydroxy-6H,6'H-(3,3'-bipyridinylidene)-6,6'-dione + NADPH + 3 H(+). The catalysed reaction is 3,3'-bipyridine-2,2',5,5',6,6'-hexol + NAD(+) = (E)-2,2',5,5'-tetrahydroxy-6H,6'H-(3,3'-bipyridinylidene)-6,6'-dione + NADH + 3 H(+). It participates in alkaloid degradation; nicotine degradation. Catalyzes the reduction of nicotine blue to its hydroquinone form. Nicotine blue is the name given to the compound formed by the autocatalytic condensation of two molecules of 2,3,6-trihydroxypyridine, an intermediate in the nicotine degradation pathway. May play a role in preventing the intracellular formation of nicotine blue semiquinone radicals, which by redox cycling would lead to the formation of toxic reactive oxygen species. Besides nicotine blue, several other quinones are reduced by nboR. The protein is Nicotine blue oxidoreductase (nboR) of Paenarthrobacter nicotinovorans (Arthrobacter nicotinovorans).